The chain runs to 65 residues: Translational regulator CsrA (65 aa).

The protein belongs to the CsrA/RsmA family. As to quaternary structure, homodimer; the beta-strands of each monomer intercalate to form a hydrophobic core, while the alpha-helices form wings that extend away from the core.

It is found in the cytoplasm. A translational regulator that binds mRNA to regulate translation initiation and/or mRNA stability. Usually binds in the 5'-UTR at or near the Shine-Dalgarno sequence preventing ribosome-binding, thus repressing translation. Its main target seems to be the major flagellin gene, while its function is anatagonized by FliW. In Bordetella petrii (strain ATCC BAA-461 / DSM 12804 / CCUG 43448), this protein is Translational regulator CsrA.